A 148-amino-acid chain; its full sequence is Snaclec B9 (148 aa).

Residues 1–24 form the signal peptide; sequence MGRFIFVSFGLLVVFLSLSGTGAA. 3 cysteine pairs are disulfide-bonded: Cys27–Cys38, Cys55–Cys144, and Cys121–Cys136. The C-type lectin domain maps to 34 to 145; it reads YDQHCYKVFD…CRLLGHFVCK (112 aa). N-linked (GlcNAc...) asparagine glycosylation is found at Asn57 and Asn60.

Belongs to the snaclec family. As to quaternary structure, heterodimer; disulfide-linked. In terms of tissue distribution, expressed by the venom gland.

The protein localises to the secreted. Its function is as follows. Interferes with one step of hemostasis (modulation of platelet aggregation, or coagulation cascade, for example). This is Snaclec B9 from Macrovipera lebetinus (Levantine viper).